A 534-amino-acid chain; its full sequence is NEDD8-activating enzyme E1 regulatory subunit (534 aa).

A2 carries the post-translational modification N-acetylalanine. An N6-acetyllysine mark is found at K6 and K341. Residues 331–344 (DMIADSNKYIKLQN) are interaction with UBA3.

It belongs to the ubiquitin-activating E1 family. ULA1 subfamily. Heterodimer of UBA3 and NAE1. The complex binds NEDD8 and UBE2M. Binds APP and TP53BP2. Ubiquitinated by TRIP12, leading to its degradation by the proteasome. In terms of tissue distribution, expressed throughout the brain. In hippocampus, strongly expressed in granule cells and in the pyramidal cell layer. Strongly expressed in the piriform cortex. In the cerebellum, expressed only in Purkinje cells.

It localises to the cell membrane. The protein operates within protein modification; protein neddylation. With respect to regulation, binding of TP53BP2 to the regulatory subunit NAE1 decreases neddylation activity. Regulatory subunit of the dimeric UBA3-NAE1 E1 enzyme. E1 activates NEDD8 by first adenylating its C-terminal glycine residue with ATP, thereafter linking this residue to the side chain of the catalytic cysteine, yielding a NEDD8-UBA3 thioester and free AMP. E1 finally transfers NEDD8 to the catalytic cysteine of UBE2M. Necessary for cell cycle progression through the S-M checkpoint. Overexpression of NAE1 causes apoptosis through deregulation of NEDD8 conjugation. The covalent attachment of NEDD8 to target proteins is known as 'neddylation' and the process is involved in the regulation of cell growth, viability and development. The protein is NEDD8-activating enzyme E1 regulatory subunit (Nae1) of Rattus norvegicus (Rat).